A 157-amino-acid polypeptide reads, in one-letter code: SsrA-binding protein (157 aa).

Positions 130 to 157 (KAEHDKRDTIKEREGKREVERVMKSRHR) are disordered.

This sequence belongs to the SmpB family.

The protein localises to the cytoplasm. Its function is as follows. Required for rescue of stalled ribosomes mediated by trans-translation. Binds to transfer-messenger RNA (tmRNA), required for stable association of tmRNA with ribosomes. tmRNA and SmpB together mimic tRNA shape, replacing the anticodon stem-loop with SmpB. tmRNA is encoded by the ssrA gene; the 2 termini fold to resemble tRNA(Ala) and it encodes a 'tag peptide', a short internal open reading frame. During trans-translation Ala-aminoacylated tmRNA acts like a tRNA, entering the A-site of stalled ribosomes, displacing the stalled mRNA. The ribosome then switches to translate the ORF on the tmRNA; the nascent peptide is terminated with the 'tag peptide' encoded by the tmRNA and targeted for degradation. The ribosome is freed to recommence translation, which seems to be the essential function of trans-translation. In Acidovorax sp. (strain JS42), this protein is SsrA-binding protein.